A 443-amino-acid chain; its full sequence is Deoxyguanosinetriphosphate triphosphohydrolase-like protein (443 aa).

The HD domain occupies 61 to 246; the sequence is RLTHSLEVAC…MEAADDICYG (186 aa).

It belongs to the dGTPase family. Type 3 subfamily.

This chain is Deoxyguanosinetriphosphate triphosphohydrolase-like protein, found in Pseudomonas aeruginosa (strain LESB58).